Consider the following 865-residue polypeptide: Protein translocase subunit SecA (865 aa).

ATP-binding positions include Q93, 111-115 (GEGKT), and D501. Zn(2+) is bound by residues C841, C843, C852, and C853.

It belongs to the SecA family. In terms of assembly, monomer and homodimer. Part of the essential Sec protein translocation apparatus which comprises SecA, SecYEG and auxiliary proteins SecDF-YajC and YidC. Requires Zn(2+) as cofactor.

It localises to the cell inner membrane. The protein localises to the cytoplasm. The catalysed reaction is ATP + H2O + cellular proteinSide 1 = ADP + phosphate + cellular proteinSide 2.. Functionally, part of the Sec protein translocase complex. Interacts with the SecYEG preprotein conducting channel. Has a central role in coupling the hydrolysis of ATP to the transfer of proteins into and across the cell membrane, serving as an ATP-driven molecular motor driving the stepwise translocation of polypeptide chains across the membrane. The chain is Protein translocase subunit SecA from Helicobacter pylori (strain Shi470).